The sequence spans 122 residues: Basic phospholipase A2 LmTX-I (122 aa).

6 disulfide bridges follow: cysteine 26–cysteine 115, cysteine 28–cysteine 44, cysteine 43–cysteine 95, cysteine 49–cysteine 122, cysteine 50–cysteine 88, and cysteine 75–cysteine 86. Residues tyrosine 27, glycine 29, and glycine 31 each coordinate Ca(2+). The active site involves histidine 47. Residue aspartate 48 coordinates Ca(2+). Aspartate 89 is a catalytic residue.

In terms of assembly, monomer. Requires Ca(2+) as cofactor. In terms of tissue distribution, expressed by the venom gland.

Its subcellular location is the secreted. It catalyses the reaction a 1,2-diacyl-sn-glycero-3-phosphocholine + H2O = a 1-acyl-sn-glycero-3-phosphocholine + a fatty acid + H(+). Its activity is regulated as follows. Inhibited by Mn(2+), Mg(2+), Zn(2+) and Cu(2+). In terms of biological role, snake venom phospholipase A2 (PLA2) that displays neurotoxic and myotoxic activities. Induces inflammatory edema by mechanisms involving mast cell activation and arachidonic acid metabolites. Increases plasma creatine kinase activity. PLA2 catalyzes the calcium-dependent hydrolysis of the 2-acyl groups in 3-sn-phosphoglycerides. This Lachesis muta muta (Bushmaster) protein is Basic phospholipase A2 LmTX-I.